An 86-amino-acid polypeptide reads, in one-letter code: Toxin Aam2 (86 aa).

The first 20 residues, 1 to 20, serve as a signal peptide directing secretion; the sequence is MNYLITISLALLLMTGVASG. The region spanning 22–84 is the LCN-type CS-alpha/beta domain; that stretch reads RDGYIADAGN…VPIKVPGKCN (63 aa). 4 disulfides stabilise this stretch: Cys-32-Cys-83, Cys-36-Cys-56, Cys-42-Cys-66, and Cys-46-Cys-68. An Asparagine amide modification is found at Asn-84.

Belongs to the long (4 C-C) scorpion toxin superfamily. Sodium channel inhibitor family. Alpha subfamily. Expressed by the venom gland.

It is found in the secreted. Its function is as follows. Alpha toxins bind voltage-independently at site-3 of sodium channels (Nav) and inhibit the inactivation of the activated channels, thereby blocking neuronal transmission. This Androctonus amoreuxi (African fattail scorpion) protein is Toxin Aam2.